A 972-amino-acid polypeptide reads, in one-letter code: UvrABC system protein A (972 aa).

32–39 is an ATP binding site; sequence GLSGSGKS. Residues 257-285 form a C4-type; atypical zinc finger; the sequence is CPNGHALAVDDLEPRSFSFNSPYGACPEC. 2 consecutive ABC transporter domains span residues 315–601 and 621–950; these read WSNG…KDSI and VDPR…KFLA. 654–661 is a binding site for ATP; it reads GVSGSGKS. A C4-type zinc finger spans residues 753–779; that stretch reads CEACTGDGTIKIEMNFLPDVYVPCEVC.

The protein belongs to the ABC transporter superfamily. UvrA family. As to quaternary structure, forms a heterotetramer with UvrB during the search for lesions.

It is found in the cytoplasm. The UvrABC repair system catalyzes the recognition and processing of DNA lesions. UvrA is an ATPase and a DNA-binding protein. A damage recognition complex composed of 2 UvrA and 2 UvrB subunits scans DNA for abnormalities. When the presence of a lesion has been verified by UvrB, the UvrA molecules dissociate. This Mycobacterium bovis (strain ATCC BAA-935 / AF2122/97) protein is UvrABC system protein A.